A 194-amino-acid polypeptide reads, in one-letter code: Holliday junction branch migration complex subunit RuvA (194 aa).

Residues 1 to 64 form a domain I region; the sequence is MIGRLRGVLT…DDSAALYGFL (64 aa). A domain II region spans residues 65-140; that stretch reads SESERRLFRH…RAADFNNGIS (76 aa). The flexible linker stretch occupies residues 140-144; sequence STSGK. The tract at residues 145–194 is domain III; sequence LNLDTVSEAALALQQLGYKPAEAARMARDAGTESDDVAIVIKKALQTVLR.

This sequence belongs to the RuvA family. Homotetramer. Forms an RuvA(8)-RuvB(12)-Holliday junction (HJ) complex. HJ DNA is sandwiched between 2 RuvA tetramers; dsDNA enters through RuvA and exits via RuvB. An RuvB hexamer assembles on each DNA strand where it exits the tetramer. Each RuvB hexamer is contacted by two RuvA subunits (via domain III) on 2 adjacent RuvB subunits; this complex drives branch migration. In the full resolvosome a probable DNA-RuvA(4)-RuvB(12)-RuvC(2) complex forms which resolves the HJ.

It localises to the cytoplasm. Its function is as follows. The RuvA-RuvB-RuvC complex processes Holliday junction (HJ) DNA during genetic recombination and DNA repair, while the RuvA-RuvB complex plays an important role in the rescue of blocked DNA replication forks via replication fork reversal (RFR). RuvA specifically binds to HJ cruciform DNA, conferring on it an open structure. The RuvB hexamer acts as an ATP-dependent pump, pulling dsDNA into and through the RuvAB complex. HJ branch migration allows RuvC to scan DNA until it finds its consensus sequence, where it cleaves and resolves the cruciform DNA. The polypeptide is Holliday junction branch migration complex subunit RuvA (Xylella fastidiosa (strain M23)).